A 597-amino-acid chain; its full sequence is uncharacterized protein (597 aa).

A run of 2 helical transmembrane segments spans residues 4-23 (LLLA…FKIV) and 209-231 (FVSV…GIAI).

The protein localises to the cell membrane. This is an uncharacterized protein from Archaeoglobus fulgidus (strain ATCC 49558 / DSM 4304 / JCM 9628 / NBRC 100126 / VC-16).